Consider the following 328-residue polypeptide: Tetraacyldisaccharide 4'-kinase (328 aa).

Residue 55–62 participates in ATP binding; that stretch reads TAGGNGKT.

It belongs to the LpxK family.

It catalyses the reaction lipid A disaccharide (E. coli) + ATP = lipid IVA (E. coli) + ADP + H(+). It participates in glycolipid biosynthesis; lipid IV(A) biosynthesis; lipid IV(A) from (3R)-3-hydroxytetradecanoyl-[acyl-carrier-protein] and UDP-N-acetyl-alpha-D-glucosamine: step 6/6. Functionally, transfers the gamma-phosphate of ATP to the 4'-position of a tetraacyldisaccharide 1-phosphate intermediate (termed DS-1-P) to form tetraacyldisaccharide 1,4'-bis-phosphate (lipid IVA). The sequence is that of Tetraacyldisaccharide 4'-kinase (lpxK) from Escherichia coli (strain K12).